Consider the following 301-residue polypeptide: Haloalkane dehalogenase (301 aa).

The 238-residue stretch at 47–284 folds into the AB hydrolase-1 domain; that stretch reads PPIVLLHGEP…INASHFIQED (238 aa). Asp-123 functions as the Nucleophile in the catalytic mechanism. The Proton donor role is filled by Asp-250. His-279 serves as the catalytic Proton acceptor.

This sequence belongs to the haloalkane dehalogenase family. Type 1 subfamily. As to quaternary structure, monomer.

It carries out the reaction 1-haloalkane + H2O = a halide anion + a primary alcohol + H(+). Functionally, catalyzes hydrolytic cleavage of carbon-halogen bonds in halogenated aliphatic compounds, leading to the formation of the corresponding primary alcohols, halide ions and protons. The chain is Haloalkane dehalogenase from Mycolicibacterium paratuberculosis (strain ATCC BAA-968 / K-10) (Mycobacterium paratuberculosis).